The following is a 353-amino-acid chain: Photosystem II D2 protein (353 aa).

Position 2 is an N-acetylthreonine (Thr-2). At Thr-2 the chain carries Phosphothreonine. Residues 41-61 (CAYFAVGGWFTGTTFVTSWYT) traverse the membrane as a helical segment. Residue His-118 participates in chlorophyll a binding. The chain crosses the membrane as a helical span at residues 125 to 141 (GFMLRQFELARSVQLRP). Pheophytin a-binding residues include Gln-130 and Asn-143. A helical membrane pass occupies residues 153 to 166 (VFVSVFLIYPLGQS). His-198 is a binding site for chlorophyll a. Residues 208 to 228 (AALLCAIHGATVENTLFEDGD) form a helical membrane-spanning segment. Positions 215 and 262 each coordinate a plastoquinone. His-215 contributes to the Fe cation binding site. His-269 contacts Fe cation. The helical transmembrane segment at 279–295 (GLWMSALGVVGLALNLR) threads the bilayer.

This sequence belongs to the reaction center PufL/M/PsbA/D family. PSII is composed of 1 copy each of membrane proteins PsbA, PsbB, PsbC, PsbD, PsbE, PsbF, PsbH, PsbI, PsbJ, PsbK, PsbL, PsbM, PsbT, PsbX, PsbY, PsbZ, Psb30/Ycf12, at least 3 peripheral proteins of the oxygen-evolving complex and a large number of cofactors. It forms dimeric complexes. The cofactor is The D1/D2 heterodimer binds P680, chlorophylls that are the primary electron donor of PSII, and subsequent electron acceptors. It shares a non-heme iron and each subunit binds pheophytin, quinone, additional chlorophylls, carotenoids and lipids. There is also a Cl(-1) ion associated with D1 and D2, which is required for oxygen evolution. The PSII complex binds additional chlorophylls, carotenoids and specific lipids..

The protein resides in the plastid. It localises to the chloroplast thylakoid membrane. It catalyses the reaction 2 a plastoquinone + 4 hnu + 2 H2O = 2 a plastoquinol + O2. In terms of biological role, photosystem II (PSII) is a light-driven water:plastoquinone oxidoreductase that uses light energy to abstract electrons from H(2)O, generating O(2) and a proton gradient subsequently used for ATP formation. It consists of a core antenna complex that captures photons, and an electron transfer chain that converts photonic excitation into a charge separation. The D1/D2 (PsbA/PsbD) reaction center heterodimer binds P680, the primary electron donor of PSII as well as several subsequent electron acceptors. D2 is needed for assembly of a stable PSII complex. This is Photosystem II D2 protein from Solanum bulbocastanum (Wild potato).